The chain runs to 436 residues: MSKPLPLVTRQGDRIAIVSGLRTPFAKQATAYHGVPAVDLGKIVVSELLARSGVAPELIDQLVFGQVVQMPEAPNIAREIVLGTGMSVHTDAYSVSRACATSFQAVANVAESIIAGSVTVAIAGGADSSSVLPIGVSKALARTLVDVNKARTLSQRLKLFSRLKLRDLLPVAPAVAEYSTGLRMGDTAEQMAKTYGISRQDQDALALRSHQMAAQAWQQGLLHDEVMTAYIPPFSDAITEDNNIRKDSTMEQYAKLRPAFDRKHGSVTAANSTPLTDGAAAVMMMSESKAKELGLQPLGYLRSFAFSAIDVWQDMLLGPSYATPLALDRAGITLADLTLIDMHEAFAAQTLANLKMFASDSFAREKLGRSQAIGEVDMSKFNVLGGSIAYGHPFAATGARMITQTLNELRRRGGGLGLTTACAAGGLGAAMIVEVE.

Cys99 serves as the catalytic Acyl-thioester intermediate. Active-site proton acceptor residues include His392 and Cys422.

This sequence belongs to the thiolase-like superfamily. Thiolase family. In terms of assembly, heterotetramer of two alpha chains (FadJ) and two beta chains (FadI).

Its subcellular location is the cytoplasm. It catalyses the reaction an acyl-CoA + acetyl-CoA = a 3-oxoacyl-CoA + CoA. The protein operates within lipid metabolism; fatty acid beta-oxidation. Its function is as follows. Catalyzes the final step of fatty acid oxidation in which acetyl-CoA is released and the CoA ester of a fatty acid two carbons shorter is formed. This is 3-ketoacyl-CoA thiolase from Yersinia enterocolitica serotype O:8 / biotype 1B (strain NCTC 13174 / 8081).